The sequence spans 575 residues: Lysine--tRNA ligase (575 aa).

2 residues coordinate Mg(2+): Glu412 and Glu419.

This sequence belongs to the class-II aminoacyl-tRNA synthetase family. As to quaternary structure, homodimer. Requires Mg(2+) as cofactor.

It is found in the cytoplasm. The catalysed reaction is tRNA(Lys) + L-lysine + ATP = L-lysyl-tRNA(Lys) + AMP + diphosphate. The protein is Lysine--tRNA ligase of Bacteroides fragilis (strain ATCC 25285 / DSM 2151 / CCUG 4856 / JCM 11019 / LMG 10263 / NCTC 9343 / Onslow / VPI 2553 / EN-2).